We begin with the raw amino-acid sequence, 765 residues long: MTTVHNLGFPRIGAKRELKFACEAYWRGEIDQTQLDKTAHTLRANHWQTQLDAGVEWLPVGDFSYYDHVLDTSFLVGNIPVRAQADGQSKLDTYFKVARGTAKEAAGASCCGGSHAAEMTKWFDTNYHYLVPELNANTHFKLNASKLLTELEQARALTSKVKPVILGPLSYLWLAKITDGSTHKLGFLDDLITVYRELLGTLAKEAVEWVQFDEPILALDLPEQWQHAFERVYHQLQLPNLSVLLATYFGPLDTNLRLAARLPTAALHLDITRGGDDLPRVLDILSPHKILSVGVIDGRNIWKADLNKLLAQLKPVKERLGNGLWLAPSCSLLHTPVDLDSEEALDADIKNWLAFAKQKLQELNILQRALDNGETSVAEALVHNAGAIAARKASAKVNNAKVQSLVNNISPSLSERESPFATRIEKQQAKYNLPTLPTTTIGSFPQTSEIRKNRKAFKSGEISQQQYDRTLRAEIAHAIELQEKIGIDVLVHGEAERNDMVEYFGEQLDGYVFTQFGWVQSYGSRCVKPPIIFGDVSRPRKITVDWAEYAQSLTSKPVKGMLTGPITMLQWSFVRDDQPRKITAQQIALALRSEVNDLEAAGITIIQVDEPALREGLPLRKKDWQNYLDWAVEAFKISTAGVGDTTQIHTHMCYAEFNDIIQAIADLDADVITIETSRSNMELLSAFEQFNYPNDIGPGVYDIHSPNIPATEQVVGLIKKAAENLPLQRLWINPDCGLKTRKWEDVIPALENMVNAAKQLRAEVA.

Residues 16–19 and lysine 121 contribute to the 5-methyltetrahydropteroyltri-L-glutamate site; that span reads RELK. L-homocysteine-binding positions include 441–443 and glutamate 494; that span reads IGS. Residues 441 to 443 and glutamate 494 each bind L-methionine; that span reads IGS. 5-methyltetrahydropteroyltri-L-glutamate contacts are provided by residues 525–526 and tryptophan 571; that span reads RC. Aspartate 609 serves as a coordination point for L-homocysteine. Aspartate 609 is an L-methionine binding site. Position 615 (glutamate 615) interacts with 5-methyltetrahydropteroyltri-L-glutamate. Histidine 651, cysteine 653, and glutamate 675 together coordinate Zn(2+). Histidine 704 (proton donor) is an active-site residue. Position 736 (cysteine 736) interacts with Zn(2+).

It belongs to the vitamin-B12 independent methionine synthase family. Zn(2+) serves as cofactor.

It carries out the reaction 5-methyltetrahydropteroyltri-L-glutamate + L-homocysteine = tetrahydropteroyltri-L-glutamate + L-methionine. It participates in amino-acid biosynthesis; L-methionine biosynthesis via de novo pathway; L-methionine from L-homocysteine (MetE route): step 1/1. Its function is as follows. Catalyzes the transfer of a methyl group from 5-methyltetrahydrofolate to homocysteine resulting in methionine formation. This is 5-methyltetrahydropteroyltriglutamate--homocysteine methyltransferase from Saccharophagus degradans (strain 2-40 / ATCC 43961 / DSM 17024).